Consider the following 239-residue polypeptide: Large ribosomal subunit protein bL25 (239 aa).

Residues 211-239 are disordered; that stretch reads KGKKDKEDEEAEKGTSVASPTTATGGTKK. Positions 226–239 are enriched in polar residues; the sequence is SVASPTTATGGTKK.

It belongs to the bacterial ribosomal protein bL25 family. CTC subfamily. As to quaternary structure, part of the 50S ribosomal subunit; part of the 5S rRNA/L5/L18/L25 subcomplex. Contacts the 5S rRNA. Binds to the 5S rRNA independently of L5 and L18.

Its function is as follows. This is one of the proteins that binds to the 5S RNA in the ribosome where it forms part of the central protuberance. The polypeptide is Large ribosomal subunit protein bL25 (Endomicrobium trichonymphae).